The chain runs to 228 residues: uncharacterized protein (228 aa).

It belongs to the HAD-like hydrolase superfamily.

It localises to the cytoplasm. Its subcellular location is the nucleus. This is an uncharacterized protein from Schizosaccharomyces pombe (strain 972 / ATCC 24843) (Fission yeast).